A 180-amino-acid polypeptide reads, in one-letter code: ATP-dependent protease subunit HslV (180 aa).

Residue threonine 2 is part of the active site. Positions 158, 161, and 164 each coordinate Na(+).

Belongs to the peptidase T1B family. HslV subfamily. As to quaternary structure, a double ring-shaped homohexamer of HslV is capped on each side by a ring-shaped HslU homohexamer. The assembly of the HslU/HslV complex is dependent on binding of ATP.

Its subcellular location is the cytoplasm. It catalyses the reaction ATP-dependent cleavage of peptide bonds with broad specificity.. With respect to regulation, allosterically activated by HslU binding. In terms of biological role, protease subunit of a proteasome-like degradation complex believed to be a general protein degrading machinery. The protein is ATP-dependent protease subunit HslV of Baumannia cicadellinicola subsp. Homalodisca coagulata.